We begin with the raw amino-acid sequence, 140 residues long: Cysteine protease inhibitor 6 (140 aa).

The cysteines at positions 103 and 109 are disulfide-linked.

Belongs to the protease inhibitor I3 (leguminous Kunitz-type inhibitor) family.

Its subcellular location is the vacuole. Its function is as follows. Inhibitor of cysteine proteases. May protect the plant by inhibiting proteases of invading organisms. The chain is Cysteine protease inhibitor 6 from Solanum tuberosum (Potato).